Reading from the N-terminus, the 472-residue chain is Flap endonuclease 1 (472 aa).

The N-domain stretch occupies residues M1–R106. D34 serves as a coordination point for Mg(2+). 2 residues coordinate DNA: R47 and R72. Mg(2+)-binding residues include D88, E160, E162, D181, and D183. The tract at residues T124–H263 is I-domain. E160 serves as a coordination point for DNA. 2 residues coordinate DNA: G241 and D243. A Mg(2+)-binding site is contributed by D243. Residues A348–F356 are interaction with PCNA.

The protein belongs to the XPG/RAD2 endonuclease family. FEN1 subfamily. In terms of assembly, interacts with PCNA. Three molecules of FEN1 bind to one PCNA trimer with each molecule binding to one PCNA monomer. PCNA stimulates the nuclease activity without altering cleavage specificity. It depends on Mg(2+) as a cofactor. In terms of processing, phosphorylated. Phosphorylation upon DNA damage induces relocalization to the nuclear plasma.

Its subcellular location is the nucleus. It is found in the nucleolus. The protein localises to the nucleoplasm. The protein resides in the mitochondrion. Its function is as follows. Structure-specific nuclease with 5'-flap endonuclease and 5'-3' exonuclease activities involved in DNA replication and repair. During DNA replication, cleaves the 5'-overhanging flap structure that is generated by displacement synthesis when DNA polymerase encounters the 5'-end of a downstream Okazaki fragment. It enters the flap from the 5'-end and then tracks to cleave the flap base, leaving a nick for ligation. Also involved in the long patch base excision repair (LP-BER) pathway, by cleaving within the apurinic/apyrimidinic (AP) site-terminated flap. Acts as a genome stabilization factor that prevents flaps from equilibrating into structures that lead to duplications and deletions. Also possesses 5'-3' exonuclease activity on nicked or gapped double-stranded DNA, and exhibits RNase H activity. Also involved in replication and repair of rDNA and in repairing mitochondrial DNA. In Cryptosporidium muris (strain RN66), this protein is Flap endonuclease 1.